Here is a 696-residue protein sequence, read N- to C-terminus: Glutamate-rich protein 6B (696 aa).

Residues 1–10 (MSAENNQLSG) show a composition bias toward polar residues. Positions 1-105 (MSAENNQLSG…EYLEKAGYLE (105 aa)) are disordered. Composition is skewed to acidic residues over residues 32–44 (EDTE…ESLQ) and 54–72 (ESLE…EEEE). Over residues 73–91 (YLGKEEYLKEEEYLGKEEH) the composition is skewed to basic and acidic residues.

This sequence belongs to the ERICH6 family.

This Homo sapiens (Human) protein is Glutamate-rich protein 6B (ERICH6B).